Here is a 217-residue protein sequence, read N- to C-terminus: Glycine betaine/carnitine/choline transport system permease protein OpuCB (217 aa).

The ABC transmembrane type-1 domain maps to 19-198; that stretch reads TGEHLYISLI…ILAIIIDYVL (180 aa). A run of 6 helical transmembrane segments spans residues 23–43, 52–74, 84–101, 128–148, 150–170, and 180–200; these read LYIS…LGVA, GAVI…AFFI, AIVA…RNTY, LVEI…STIY, IGWA…YIFI, and IIGG…VLAV.

This sequence belongs to the binding-protein-dependent transport system permease family. CysTW subfamily. The complex is composed of two ATP-binding proteins (OpuCA), two transmembrane proteins (OpuCB and OpuCD) and a solute-binding protein (OpuCC).

Its subcellular location is the cell membrane. Involved in a high affinity multicomponent binding-protein-dependent transport system for glycine betaine, carnitine and choline; probably responsible for the translocation of the substrate across the membrane. In Bacillus subtilis (strain 168), this protein is Glycine betaine/carnitine/choline transport system permease protein OpuCB (opuCB).